The chain runs to 85 residues: Large ribosomal subunit protein bL27 (85 aa).

The protein belongs to the bacterial ribosomal protein bL27 family.

In Ruthia magnifica subsp. Calyptogena magnifica, this protein is Large ribosomal subunit protein bL27.